Here is a 382-residue protein sequence, read N- to C-terminus: MEYHNVSSVLGNVSSVLRPDARLSAESRLLGWNVPPDELRHIPEHWLIYPEPPESMNYLLGTLYIFFTVISMIGNGLVMWVFSAAKSLRTPSNILVINLAFCDFMMMIKTPIFIYNSFHQGYALGHLGCQIFGVIGSYTGIAAGATNAFIAYDRYNVITRPMEGKMTHGKAIAMIIFIYLYATPWVVACYTESWGRFVPEGYLTSCTFDYLTDNFDTRLFVACIFFFSFVCPTTMITYYYSQIVGHVFSHEKALRDQAKKMNVDSLRSNVDKSKEAAEIRIAKAAITICFLFFASWTPYGVMSLIGAFGDKTLLTPGATMIPACTCKMVACIDPFVYAISHPRYRMELQKRCPWLAISEKAPESAAAISTSTTQEQQQTTAA.

Topologically, residues 1–56 are extracellular; it reads MEYHNVSSVLGNVSSVLRPDARLSAESRLLGWNVPPDELRHIPEHWLIYPEPPESM. N-linked (GlcNAc...) asparagine glycosylation occurs at Asn-12. Residues 57–81 traverse the membrane as a helical segment; the sequence is NYLLGTLYIFFTVISMIGNGLVMWV. At 82-93 the chain is on the cytoplasmic side; that stretch reads FSAAKSLRTPSN. Residues 94-118 traverse the membrane as a helical segment; sequence ILVINLAFCDFMMMIKTPIFIYNSF. At 119–132 the chain is on the extracellular side; sequence HQGYALGHLGCQIF. A disulfide bond links Cys-129 and Cys-206. A helical transmembrane segment spans residues 133 to 152; the sequence is GVIGSYTGIAAGATNAFIAY. The Cytoplasmic segment spans residues 153 to 170; the sequence is DRYNVITRPMEGKMTHGK. A helical membrane pass occupies residues 171-195; sequence AIAMIIFIYLYATPWVVACYTESWG. The Extracellular portion of the chain corresponds to 196–219; sequence RFVPEGYLTSCTFDYLTDNFDTRL. A helical transmembrane segment spans residues 220-247; that stretch reads FVACIFFFSFVCPTTMITYYYSQIVGHV. At 248–283 the chain is on the cytoplasmic side; that stretch reads FSHEKALRDQAKKMNVDSLRSNVDKSKEAAEIRIAK. A helical membrane pass occupies residues 284–307; sequence AAITICFLFFASWTPYGVMSLIGA. The Extracellular portion of the chain corresponds to 308 to 315; sequence FGDKTLLT. Residues 316–340 traverse the membrane as a helical segment; sequence PGATMIPACTCKMVACIDPFVYAIS. N6-(retinylidene)lysine is present on Lys-327. Over 341 to 382 the chain is Cytoplasmic; sequence HPRYRMELQKRCPWLAISEKAPESAAAISTSTTQEQQQTTAA.

The protein belongs to the G-protein coupled receptor 1 family. Opsin subfamily. Phosphorylated on some or all of the serine and threonine residues present in the C-terminal region.

The protein resides in the membrane. Its function is as follows. Visual pigments are the light-absorbing molecules that mediate vision. They consist of an apoprotein, opsin, covalently linked to cis-retinal. This chain is Opsin Rh3 (Rh3), found in Drosophila pseudoobscura pseudoobscura (Fruit fly).